Reading from the N-terminus, the 141-residue chain is Protein wingless (141 aa).

A lipid anchor (O-palmitoleoyl serine; by PORCN) is attached at Ser3. A compositionally biased stretch (polar residues) spans 40–49; it reads TDLEAPTQRN. The segment at 40-61 is disordered; the sequence is TDLEAPTQRNDAAPHRAPRRER. An intrachain disulfide couples Cys107 to Cys122. N-linked (GlcNAc...) asparagine glycosylation is found at Asn108 and Asn138.

Belongs to the Wnt family. In terms of processing, palmitoleoylated by porcupine. The lipid group functions as a sorting signal, targeting the ligand to polarized vesicles that transport wg to unique sites at the cell surface. Depalmitoleoylated by notum, leading to inhibit Wnt signaling pathway.

It localises to the secreted. The protein localises to the extracellular space. The protein resides in the extracellular matrix. Segment polarity protein. Binds to the frizzled seven-transmembrane receptors. This protein is probably a growth factor. This chain is Protein wingless (WG), found in Manduca sexta (Tobacco hawkmoth).